A 76-amino-acid polypeptide reads, in one-letter code: Alpha/kappa-conotoxin pl14a (76 aa).

A signal peptide spans 1-24 (MPSVRSVTCCCLLWMMFSVQLVTP). The propeptide occupies 25 to 39 (GSPGTAQLSGHRTAR). Disulfide bonds link C46/C61 and C50/C63. R64 is subject to Arginine amide. Positions 65-76 (GKRDAVSSSMAV) are excised as a propeptide.

Belongs to the conotoxin J superfamily. Expressed by the venom duct.

It localises to the secreted. Its function is as follows. Highly inhibits both nicotinic acetylcholine receptors (neuronal (IC(50)=8.7 uM for alpha-3/beta-4) and muscular (IC(50)=0.54 uM for alpha-1-beta-1-epsilon-delta (CHRNA1-CHRNB1-CHRND-CHRNE)) subtypes) and the voltage-gated potassium channel Kv1.6/KCNA6 subtype (IC(50)=1.59 uM). This is Alpha/kappa-conotoxin pl14a from Conus planorbis (Planorbis cone).